The primary structure comprises 96 residues: uncharacterized protein (96 aa).

The first 23 residues, 1–23 (MKQFYSVVLTIIIYISSQSNVVS), serve as a signal peptide directing secretion. 3 disulfide bridges follow: Cys60/Cys74, Cys67/Cys78, and Cys73/Cys83.

The protein resides in the secreted. This is an uncharacterized protein from Schistosoma japonicum (Blood fluke).